The chain runs to 353 residues: Variable large protein 12 (353 aa).

The N-terminal stretch at Met1–Ser18 is a signal peptide. The N-palmitoyl cysteine moiety is linked to residue Cys19. The S-diacylglycerol cysteine moiety is linked to residue Cys19.

Belongs to the variable large protein (Vlp) family. Beta subfamily.

It localises to the cell outer membrane. Functionally, the Vlp and Vsp proteins are antigenically distinct proteins, only one vlp or vsp gene is transcriptionally active at any one time. Switching between these genes is a mechanism of host immune response evasion. This chain is Variable large protein 12, found in Borrelia hermsii.